A 790-amino-acid polypeptide reads, in one-letter code: RNA-directed RNA polymerase 2a (790 aa).

The RdRp catalytic domain maps to 524–639 (FHFKEIDFSK…GTVEELPRDQ (116 aa)). A disordered region spans residues 771–790 (IKPRRVKKSHSDARSRARRA). Basic and acidic residues predominate over residues 779 to 790 (SHSDARSRARRA).

Belongs to the bromoviridae 2a family. In terms of assembly, interacts with replication protein 1a.

The enzyme catalyses RNA(n) + a ribonucleoside 5'-triphosphate = RNA(n+1) + diphosphate. Its function is as follows. RNA-dependent RNA polymerase which replicates the viral genome composed of 3 RNA segments, RNA1, RNA2 and RNA3. In Alfalfa mosaic virus (AMV), this protein is RNA-directed RNA polymerase 2a.